The following is a 317-amino-acid chain: D-aminoacyl-tRNA deacylase (317 aa).

It belongs to the DtdA deacylase family. It depends on Zn(2+) as a cofactor. Ubiquitous.

The protein resides in the nucleus. The protein localises to the cytoplasm. It catalyses the reaction a D-aminoacyl-tRNA + H2O = a tRNA + a D-alpha-amino acid + H(+). The catalysed reaction is glycyl-tRNA(Ala) + H2O = tRNA(Ala) + glycine + H(+). Hydrolyzes D-aminoacyl-tRNA into D-amino acid and free tRNA. Broad specificity toward the amino acid, but strict specificity toward the D-isomer. Seems to be required for ethanol tolerance. The sequence is that of D-aminoacyl-tRNA deacylase (GEK1) from Arabidopsis thaliana (Mouse-ear cress).